Here is a 968-residue protein sequence, read N- to C-terminus: RNA polymerase-associated protein RapA (968 aa).

Residues 164–334 (DVGRRHAPRV…FARLRLLDPN (171 aa)) form the Helicase ATP-binding domain. 177–184 (DEVGLGKT) provides a ligand contact to ATP. Positions 280-283 (DEAH) match the DEAH box motif. Residues 490-685 (RVEWLMGYLT…ALKAQLEQGR (196 aa)) enclose the Helicase C-terminal domain.

The protein belongs to the SNF2/RAD54 helicase family. RapA subfamily. In terms of assembly, interacts with the RNAP. Has a higher affinity for the core RNAP than for the holoenzyme. Its ATPase activity is stimulated by binding to RNAP.

Functionally, transcription regulator that activates transcription by stimulating RNA polymerase (RNAP) recycling in case of stress conditions such as supercoiled DNA or high salt concentrations. Probably acts by releasing the RNAP, when it is trapped or immobilized on tightly supercoiled DNA. Does not activate transcription on linear DNA. Probably not involved in DNA repair. The sequence is that of RNA polymerase-associated protein RapA from Salmonella choleraesuis (strain SC-B67).